Consider the following 209-residue polypeptide: Guanylate kinase (209 aa).

The Guanylate kinase-like domain maps to 7-185 (GNLYIVAAPS…AAMELQSIVI (179 aa)). 14 to 21 (APSGGGKT) is an ATP binding site.

It belongs to the guanylate kinase family.

Its subcellular location is the cytoplasm. It catalyses the reaction GMP + ATP = GDP + ADP. Its function is as follows. Essential for recycling GMP and indirectly, cGMP. The chain is Guanylate kinase from Legionella pneumophila (strain Paris).